We begin with the raw amino-acid sequence, 126 residues long: Ribonuclease P protein component (126 aa).

It belongs to the RnpA family. As to quaternary structure, consists of a catalytic RNA component (M1 or rnpB) and a protein subunit.

It carries out the reaction Endonucleolytic cleavage of RNA, removing 5'-extranucleotides from tRNA precursor.. Functionally, RNaseP catalyzes the removal of the 5'-leader sequence from pre-tRNA to produce the mature 5'-terminus. It can also cleave other RNA substrates such as 4.5S RNA. The protein component plays an auxiliary but essential role in vivo by binding to the 5'-leader sequence and broadening the substrate specificity of the ribozyme. The sequence is that of Ribonuclease P protein component from Synechococcus sp. (strain JA-3-3Ab) (Cyanobacteria bacterium Yellowstone A-Prime).